A 983-amino-acid polypeptide reads, in one-letter code: Importin beta-like protein kap113 (983 aa).

The 73-residue stretch at 24–96 (AEGHLNNWKK…RCNALLGSIK (73 aa)) folds into the Importin N-terminal domain.

The protein belongs to the importin beta family.

It localises to the nucleus. Functions as a component of the nuclear pore complex (NPC). NPC components, collectively referred to as nucleoporins (NUPs), can play the role of both NPC structural components and of docking or interaction partners for transiently associated nuclear transport factors. Active directional transport is assured by both, a Phe-Gly (FG) repeat affinity gradient for these transport factors across the NPC and a transport cofactor concentration gradient across the nuclear envelope. Involved in the export of mRNA from the nucleus to the cytoplasm. May play a role in mitotic spindle formation and/or function. The protein is Importin beta-like protein kap113 (kap113) of Schizosaccharomyces pombe (strain 972 / ATCC 24843) (Fission yeast).